Reading from the N-terminus, the 207-residue chain is UPF0126 inner membrane protein YadS (207 aa).

Residues 1 to 21 form a helical membrane-spanning segment; the sequence is MLVYWLDIVGTAVFAISGVLL. The Cytoplasmic portion of the chain corresponds to 22-29; the sequence is AGKLRMDP. A helical transmembrane segment spans residues 30 to 50; it reads FGVLVLGVVTAVGGGTIRDMA. Residues 51–58 are Periplasmic-facing; that stretch reads LDHGPVFW. A helical membrane pass occupies residues 59–79; that stretch reads VKDPTDLVVAMVTSMLTIVLV. The Cytoplasmic portion of the chain corresponds to 80-85; it reads RQPRRL. The chain crosses the membrane as a helical span at residues 86–106; the sequence is PKWMLPVLDAVGLAVFVGIGV. Over 107 to 112 the chain is Periplasmic; sequence NKAFNA. A helical membrane pass occupies residues 113–133; the sequence is EAGPLIAVCMGVITGVGGGII. Over 134-148 the chain is Cytoplasmic; the sequence is RDVLAREIPMILRTE. Residues 149 to 169 traverse the membrane as a helical segment; it reads IYATACIIGGIVHATAYYTFS. Val170 is a topological domain (periplasmic). Residues 171-191 form a helical membrane-spanning segment; that stretch reads PLETASMMGMVVTLLIRLAAI. Residues 192-207 are Cytoplasmic-facing; the sequence is RWHLKLPTFALDENGR.

Belongs to the UPF0126 family.

Its subcellular location is the cell inner membrane. This chain is UPF0126 inner membrane protein YadS (yadS), found in Escherichia coli O6:H1 (strain CFT073 / ATCC 700928 / UPEC).